We begin with the raw amino-acid sequence, 131 residues long: Hydrophilin PGA14 (131 aa).

The signal sequence occupies residues 1 to 18 (MKFTTVATVFAISSLAAA). Basic and acidic residues-rich tracts occupy residues 42 to 59 (YGRFDKTSRSKKPKETGT) and 79 to 96 (KESDLPKKRDAVVARDSK). The segment at 42–110 (YGRFDKTSRS…NSTTSSGNNG (69 aa)) is disordered. N-linked (GlcNAc...) asparagine glycans are attached at residues asparagine 97 and asparagine 101. Low complexity predominate over residues 97–110 (NASSNSTTSSGNNG). A lipid anchor (GPI-anchor amidated serine) is attached at serine 105. Positions 106–131 (SGNNGVATGVSLGLAGVLAVGAALVI) are cleaved as a propeptide — removed in mature form.

It belongs to the PGA14 family. In terms of processing, the GPI-anchor is attached to the protein in the endoplasmic reticulum and serves to target the protein to the cell surface. There, the glucosamine-inositol phospholipid moiety is cleaved off and the GPI-modified mannoprotein is covalently attached via its lipidless GPI glycan remnant to the 1,6-beta-glucan of the outer cell wall layer.

It is found in the secreted. It localises to the cell wall. Its subcellular location is the membrane. Functionally, hydrophilin which is essential to overcome the simple stress of the desiccation-rehydration process. This chain is Hydrophilin PGA14 (PGA14), found in Candida albicans (strain SC5314 / ATCC MYA-2876) (Yeast).